A 3323-amino-acid polypeptide reads, in one-letter code: Mucin-3A (3323 aa).

A signal peptide spans M1 to A15. 15 disordered regions span residues T218–T243, T270–T289, I325–T345, G359–A380, M539–E677, N700–S722, E734–K756, S909–P991, I1170–T1201, A1318–S1356, A1380–V1442, T1484–K1509, T1714–S1746, F1793–S1844, and T1900–T2056. Residues T270 to T284 are compositionally biased toward low complexity. Over residues G545–H563 the composition is skewed to polar residues. Low complexity predominate over residues T564–T618. A compositionally biased stretch (polar residues) spans D619–M629. Low complexity predominate over residues T630–T676. Over residues N700–N721 the composition is skewed to polar residues. The span at S909 to S918 shows a compositional bias: low complexity. Residues A919–G932 are compositionally biased toward polar residues. Over residues T933–P991 the composition is skewed to low complexity. A compositionally biased stretch (low complexity) spans P1324–S1356. A run of 32 repeats spans residues V1893–S1910, I1911–S1927, I1928–S1944, I1945–S1961, I1962–S1978, I1979–L1995, I1996–S2012, I2013–S2029, I2030–S2046, I2047–L2062, I2063–S2079, I2080–S2096, I2097–S2113, I2114–S2130, I2131–S2147, I2148–L2164, I2165–S2191, N2192–S2208, I2209–S2225, I2226–S2242, I2243–S2259, I2260–S2276, I2277–L2293, I2294–S2310, I2311–S2327, I2328–S2344, I2345–S2361, I2362–S2378, I2379–W2395, V2396–S2412, I2413–S2429, and I2430–S2446. The 32 X approximate tandem repeats, Ser/Thr-rich stretch occupies residues V1893 to S2446. Residues F1907–N1947 show a composition bias toward polar residues. Over residues T1948–T2056 the composition is skewed to low complexity. Low complexity-rich tracts occupy residues T2100–T2170, T2177–T2384, T2393–T2447, and T2464–T2507. Disordered stretches follow at residues T2100 to T2447, T2464 to D2508, T2578 to T2608, I2631 to S2656, M2834 to N2858, and S2897 to R2937. A compositionally biased stretch (polar residues) spans T2578–G2602. Low complexity-rich tracts occupy residues S2633–S2656, M2834–S2849, and T2905–R2937. In terms of domain architecture, EGF-like spans S2976 to E3009. 2 disulfide bridges follow: C2980/C2986 and C2999/C3008. The SEA domain occupies D3018–K3143. Residues L3227–V3247 form a helical membrane-spanning segment.

In terms of processing, highly O-glycosylated and probably also N-glycosylated. In terms of tissue distribution, broad specificity; small intestine, colon, colonic tumors, heart, liver, thymus, prostate, pancreas and gall bladder.

The protein localises to the membrane. The protein resides in the secreted. Functionally, major glycoprotein component of a variety of mucus gels. Thought to provide a protective, lubricating barrier against particles and infectious agents at mucosal surfaces. May be involved in ligand binding and intracellular signaling. The sequence is that of Mucin-3A from Homo sapiens (Human).